Here is a 119-residue protein sequence, read N- to C-terminus: Holo-[acyl-carrier-protein] synthase (119 aa).

The Mg(2+) site is built by Asp-8 and Glu-58.

It belongs to the P-Pant transferase superfamily. AcpS family. Mg(2+) is required as a cofactor.

It is found in the cytoplasm. It carries out the reaction apo-[ACP] + CoA = holo-[ACP] + adenosine 3',5'-bisphosphate + H(+). Its function is as follows. Transfers the 4'-phosphopantetheine moiety from coenzyme A to a Ser of acyl-carrier-protein. This Limosilactobacillus fermentum (strain NBRC 3956 / LMG 18251) (Lactobacillus fermentum) protein is Holo-[acyl-carrier-protein] synthase.